A 320-amino-acid polypeptide reads, in one-letter code: Lipoyl synthase (320 aa).

Residues C67, C72, C78, C93, C97, C100, and S307 each coordinate [4Fe-4S] cluster. In terms of domain architecture, Radical SAM core spans 79–296 (FNHGTATFMI…RTKAEVMGFE (218 aa)).

This sequence belongs to the radical SAM superfamily. Lipoyl synthase family. [4Fe-4S] cluster is required as a cofactor.

It is found in the cytoplasm. It catalyses the reaction [[Fe-S] cluster scaffold protein carrying a second [4Fe-4S](2+) cluster] + N(6)-octanoyl-L-lysyl-[protein] + 2 oxidized [2Fe-2S]-[ferredoxin] + 2 S-adenosyl-L-methionine + 4 H(+) = [[Fe-S] cluster scaffold protein] + N(6)-[(R)-dihydrolipoyl]-L-lysyl-[protein] + 4 Fe(3+) + 2 hydrogen sulfide + 2 5'-deoxyadenosine + 2 L-methionine + 2 reduced [2Fe-2S]-[ferredoxin]. It functions in the pathway protein modification; protein lipoylation via endogenous pathway; protein N(6)-(lipoyl)lysine from octanoyl-[acyl-carrier-protein]: step 2/2. Its function is as follows. Catalyzes the radical-mediated insertion of two sulfur atoms into the C-6 and C-8 positions of the octanoyl moiety bound to the lipoyl domains of lipoate-dependent enzymes, thereby converting the octanoylated domains into lipoylated derivatives. The sequence is that of Lipoyl synthase from Mannheimia succiniciproducens (strain KCTC 0769BP / MBEL55E).